The sequence spans 206 residues: Ras-related protein O-RAL (206 aa).

Residue 21–28 (GSGGVGKS) participates in GTP binding. An Effector region motif is present at residues 43-51 (YEPTKADSY). Residues 68-72 (DTAGQ) and 128-131 (NKSD) each bind GTP. Residues 180–189 (KMSENKDKNG) are compositionally biased toward basic and acidic residues. The interval 180-206 (KMSENKDKNGKKSSRNKKSLRERCCIL) is disordered. C203 is modified (cysteine methyl ester). C203 carries the S-geranylgeranyl cysteine lipid modification. A propeptide spans 204–206 (CIL) (removed in mature form).

The protein belongs to the small GTPase superfamily. Ras family.

Its subcellular location is the cell membrane. It catalyses the reaction GTP + H2O = GDP + phosphate + H(+). This is Ras-related protein O-RAL from Diplobatis ommata (Ocellated electric ray).